The primary structure comprises 175 residues: MIFLMTKDSFLLQGFWQLKDNHEMIKINSLSEIKKVGNKPFKVIIDTYHNHILDEEAIKFLEKLDAERIIVLAPYHISKLKAKAPIYFVSRKESIKNLLEITYGKHLPHKNSQLCFSHNQFKIMQLILKNKNESNITSTLNISQQTLKIQKFNIMYKLKLRRMSDIVTLGITSYF.

Residues 109–174 (HKNSQLCFSH…DIVTLGITSY (66 aa)) enclose the HTH luxR-type domain. Positions 133–152 (ESNITSTLNISQQTLKIQKF) form a DNA-binding region, H-T-H motif.

In terms of biological role, regulates the expression of several genes involved in acid resistance. Required for the expression of gadA and gadBC, among others, regardless of media or growth conditions. Binds directly to the 20 bp GAD box found in the control regions of both loci. Could be involved in the regulation of the genes coding for the type III secretion system in enterohaemorragic strains. This chain is Transcriptional regulator GadE (gadE), found in Escherichia coli O157:H7.